The sequence spans 1090 residues: Telomerase reverse transcriptase (1090 aa).

Residues 184 to 301 (GFLLRPPSRK…PLEGGPSWRS (118 aa)) are disordered. The segment covering 190 to 204 (PSRKHKSFQVGKKTR) has biased composition (basic residues). Basic and acidic residues-rich tracts occupy residues 218-232 (EESRKRRRVESEVST) and 252-262 (HHEERRQHEAV). Over residues 281–294 (KPPPETSAAPPPLE) the composition is skewed to pro residues. The short motif at 316 to 321 (TLGFLY) is the TFLY; involved in RNA binding element. Interaction with RNA template regions lie at residues 371–376 (LPLRYF) and 477–503 (WKIKVMDCDWLKLRRTAGRFPPSELAY). Positions 569–893 (SPAQVASLPK…CLFPWCGLLL (325 aa)) constitute a Reverse transcriptase domain. Mg(2+)-binding residues include Asp-666, Asp-826, and Asp-827.

The protein belongs to the reverse transcriptase family. Telomerase subfamily. Catalytic subunit of the telomerase holoenzyme complex composed minimally of TERT and the telomerase RNA template component (TERC). In terms of tissue distribution, expressed at highest levels in gonads and brain, and at lower levels in heart, spleen, kidney, gill, muscle and skin. Detected in embryonic stem cell lines before and after differentiation. Isoform F is expressed in gonads, with higher levels in testis relative to ovary, but is not detected in other tissues. Isoform B is expressed predominantly in testis. Isoform C is up-regulated in embryonic stem cell lines after differentiation.

The protein localises to the nucleus. It is found in the chromosome. It localises to the telomere. It catalyses the reaction DNA(n) + a 2'-deoxyribonucleoside 5'-triphosphate = DNA(n+1) + diphosphate. Functionally, telomerase is a ribonucleoprotein enzyme essential for the replication of chromosome termini in most eukaryotes. It elongates telomeres. It is a reverse transcriptase that adds simple sequence repeats to chromosome ends by copying a template sequence within the RNA component of the enzyme. The protein is Telomerase reverse transcriptase of Oryzias latipes (Japanese rice fish).